A 343-amino-acid chain; its full sequence is Selenide, water dikinase (343 aa).

The active site involves Sec16. Position 16 (Sec16) is a non-standard amino acid, selenocysteine. ATP contacts are provided by residues Lys19 and 46-48 (GAE). A Mg(2+)-binding site is contributed by Asp49. Residues Asp66, Asp89, and 137 to 139 (GHT) each bind ATP. Asp89 lines the Mg(2+) pocket. Asp225 lines the Mg(2+) pocket.

It belongs to the selenophosphate synthase 1 family. Class I subfamily. In terms of assembly, homodimer. Mg(2+) serves as cofactor.

The enzyme catalyses hydrogenselenide + ATP + H2O = selenophosphate + AMP + phosphate + 2 H(+). Its function is as follows. Synthesizes selenophosphate from selenide and ATP. The polypeptide is Selenide, water dikinase (Citrifermentans bemidjiense (strain ATCC BAA-1014 / DSM 16622 / JCM 12645 / Bem) (Geobacter bemidjiensis)).